Here is a 127-residue protein sequence, read N- to C-terminus: Large ribosomal subunit protein bL12 (127 aa).

It belongs to the bacterial ribosomal protein bL12 family. As to quaternary structure, homodimer. Part of the ribosomal stalk of the 50S ribosomal subunit. Forms a multimeric L10(L12)X complex, where L10 forms an elongated spine to which 2 to 4 L12 dimers bind in a sequential fashion. Binds GTP-bound translation factors.

In terms of biological role, forms part of the ribosomal stalk which helps the ribosome interact with GTP-bound translation factors. Is thus essential for accurate translation. The polypeptide is Large ribosomal subunit protein bL12 (Streptomyces virginiae (Streptomyces cinnamonensis)).